The primary structure comprises 108 residues: Movement protein TGB2 (108 aa).

Residues 1–8 are Cytoplasmic-facing; sequence MPLTPPPD. A helical membrane pass occupies residues 9 to 29; sequence YTKPFIAVVVGGTLAAFVLLL. Topologically, residues 30 to 71 are lumenal; sequence TRNTLPHTGDNLHSLPHGGTYCDGTKRIRYGGPHRSHVPELP. A helical membrane pass occupies residues 72 to 92; it reads AKSWALITVVAILIALHFSCL. Residues 93 to 108 lie on the Cytoplasmic side of the membrane; the sequence is RTHRVHRCVLCHTTSG.

Belongs to the Tymovirales TGBp2 protein family.

Its subcellular location is the host endoplasmic reticulum membrane. Functionally, plays a role in viral cell-to-cell propagation, by facilitating genome transport to neighboring plant cells through plasmosdesmata,. The protein is Movement protein TGB2 of Lily virus X.